A 474-amino-acid chain; its full sequence is tRNA-2-methylthio-N(6)-dimethylallyladenosine synthase (474 aa).

One can recognise an MTTase N-terminal domain in the interval 3 to 120 (QKLHIKTWGC…LPEMINQIRG (118 aa)). [4Fe-4S] cluster is bound by residues Cys12, Cys49, Cys83, Cys157, Cys161, and Cys164. A Radical SAM core domain is found at 143-375 (RAEGPTAFVS…QQRINNQAAQ (233 aa)). In terms of domain architecture, TRAM spans 378-441 (RAMLGTEQRV…TNSLRGEVVR (64 aa)).

Belongs to the methylthiotransferase family. MiaB subfamily. Monomer. Requires [4Fe-4S] cluster as cofactor.

The protein resides in the cytoplasm. It carries out the reaction N(6)-dimethylallyladenosine(37) in tRNA + (sulfur carrier)-SH + AH2 + 2 S-adenosyl-L-methionine = 2-methylsulfanyl-N(6)-dimethylallyladenosine(37) in tRNA + (sulfur carrier)-H + 5'-deoxyadenosine + L-methionine + A + S-adenosyl-L-homocysteine + 2 H(+). Functionally, catalyzes the methylthiolation of N6-(dimethylallyl)adenosine (i(6)A), leading to the formation of 2-methylthio-N6-(dimethylallyl)adenosine (ms(2)i(6)A) at position 37 in tRNAs that read codons beginning with uridine. The protein is tRNA-2-methylthio-N(6)-dimethylallyladenosine synthase of Histophilus somni (strain 129Pt) (Haemophilus somnus).